The chain runs to 178 residues: Ribonuclease M5 (178 aa).

The 94-residue stretch at 10–103 (DGVIVCEGKT…NSTKIGVAEA (94 aa)) folds into the Toprim domain. Residues Glu-16, Asp-62, and Asp-64 each contribute to the Mg(2+) site.

It belongs to the ribonuclease M5 family. The cofactor is Mg(2+).

It localises to the cytoplasm. It carries out the reaction Endonucleolytic cleavage of RNA, removing 21 and 42 nucleotides, respectively, from the 5'- and 3'-termini of a 5S-rRNA precursor.. Required for correct processing of both the 5' and 3' ends of 5S rRNA precursor. Cleaves both sides of a double-stranded region yielding mature 5S rRNA in one step. This is Ribonuclease M5 from Mycoplasma pneumoniae (strain ATCC 29342 / M129 / Subtype 1) (Mycoplasmoides pneumoniae).